The sequence spans 226 residues: Fibronectin type III domain-containing protein 9 (226 aa).

The region spanning 1-101 is the Fibronectin type-III domain; it reads MNIEVGNVSH…FHTLDKSPLA (101 aa). The helical transmembrane segment at 113 to 133 threads the bilayer; the sequence is LWVLMAILLACFTAVLAFICL.

The protein resides in the membrane. The sequence is that of Fibronectin type III domain-containing protein 9 (Fndc9) from Mus musculus (Mouse).